A 369-amino-acid polypeptide reads, in one-letter code: ATP-dependent 6-phosphofructokinase (369 aa).

Residues G15, 81 to 82 (KG), and 108 to 111 (GDGS) each bind ATP. D109 lines the Mg(2+) pocket. Substrate-binding positions include 132–134 (TID), R169, 176–178 (MGR), E230, R266, and 272–275 (HIQR). D134 serves as the catalytic Proton acceptor.

This sequence belongs to the phosphofructokinase type A (PFKA) family. Mixed-substrate PFK group III subfamily. In terms of assembly, homodimer or homotetramer. It depends on Mg(2+) as a cofactor.

It is found in the cytoplasm. It catalyses the reaction beta-D-fructose 6-phosphate + ATP = beta-D-fructose 1,6-bisphosphate + ADP + H(+). Its pathway is carbohydrate degradation; glycolysis; D-glyceraldehyde 3-phosphate and glycerone phosphate from D-glucose: step 3/4. Its function is as follows. Catalyzes the phosphorylation of D-fructose 6-phosphate to fructose 1,6-bisphosphate by ATP, the first committing step of glycolysis. This is ATP-dependent 6-phosphofructokinase from Thermosynechococcus vestitus (strain NIES-2133 / IAM M-273 / BP-1).